Reading from the N-terminus, the 408-residue chain is Glutamate N-acetyltransferase (408 aa).

Residues threonine 150, lysine 176, threonine 189, glutamate 271, asparagine 403, and threonine 408 each contribute to the substrate site. Threonine 189 serves as the catalytic Nucleophile.

It belongs to the ArgJ family. As to quaternary structure, heterotetramer of two alpha and two beta chains.

The protein localises to the cytoplasm. It carries out the reaction N(2)-acetyl-L-ornithine + L-glutamate = N-acetyl-L-glutamate + L-ornithine. Its pathway is amino-acid biosynthesis; L-arginine biosynthesis; L-ornithine and N-acetyl-L-glutamate from L-glutamate and N(2)-acetyl-L-ornithine (cyclic): step 1/1. Catalyzes the transfer of the acetyl group from N(2)-acetylornithine to glutamate, forming N-acetylglutamate and L-ornithine. In Methanococcus maripaludis (strain C5 / ATCC BAA-1333), this protein is Glutamate N-acetyltransferase.